Consider the following 380-residue polypeptide: Flap endonuclease 1-A (380 aa).

The interval 1 to 105 (MGIKGLTKLL…QELAKRYSKR (105 aa)) is N-domain. Residue Asp34 coordinates Mg(2+). DNA is bound at residue Arg71. Mg(2+)-binding residues include Asp87, Glu159, Glu161, Asp180, and Asp182. The interval 123–254 (AIEKFSKRTV…QTALKLIRQH (132 aa)) is I-domain. Glu159 contributes to the DNA binding site. Positions 232 and 234 each coordinate DNA. Asp234 is a Mg(2+) binding site. The tract at residues 336 to 344 (SQGRLESFF) is interaction with PCNA. Residues 351–380 (SVPLKRKDTSEKPTKAVANKKTKGAGGKKK) are disordered. The segment covering 355-364 (KRKDTSEKPT) has biased composition (basic and acidic residues). A compositionally biased stretch (basic residues) spans 368 to 380 (ANKKTKGAGGKKK).

Belongs to the XPG/RAD2 endonuclease family. FEN1 subfamily. As to quaternary structure, interacts with PCNA. Three molecules of FEN1 bind to one PCNA trimer with each molecule binding to one PCNA monomer. PCNA stimulates the nuclease activity without altering cleavage specificity. Requires Mg(2+) as cofactor. In terms of processing, phosphorylated. Phosphorylation upon DNA damage induces relocalization to the nuclear plasma. Strongly expressed in proliferating tissues: root and shoot apical meristem, tiller bud, leaf, ligule primordia, marginal meristem of young leaves and panicles. Not expressed in mature leaves when exposed to UV.

Its subcellular location is the nucleus. It localises to the nucleolus. The protein localises to the nucleoplasm. It is found in the mitochondrion. With respect to regulation, inhibited by NaCl. In terms of biological role, structure-specific nuclease with 5'-flap endonuclease and 5'-3' exonuclease activities involved in DNA replication and repair. During DNA replication, cleaves the 5'-overhanging flap structure that is generated by displacement synthesis when DNA polymerase encounters the 5'-end of a downstream Okazaki fragment. It enters the flap from the 5'-end and then tracks to cleave the flap base, leaving a nick for ligation. Also involved in the long patch base excision repair (LP-BER) pathway, by cleaving within the apurinic/apyrimidinic (AP) site-terminated flap. Acts as a genome stabilization factor that prevents flaps from equilibrating into structures that lead to duplications and deletions. Also possesses 5'-3' exonuclease activity on nicked or gapped double-stranded DNA, and exhibits RNase H activity. Also involved in replication and repair of rDNA and in repairing mitochondrial DNA. May be required for cell proliferation. The protein is Flap endonuclease 1-A of Oryza sativa subsp. japonica (Rice).